We begin with the raw amino-acid sequence, 264 residues long: Synaptophysin-like protein 2 (264 aa).

Residues Met-1 to Glu-33 are Cytoplasmic-facing. Residues Arg-30 to Pro-238 enclose the MARVEL domain. The chain crosses the membrane as a helical span at residues Pro-34–Gly-54. The Vesicular segment spans residues Ser-55 to Glu-116. Residues Phe-117–Leu-137 form a helical membrane-spanning segment. The Cytoplasmic segment spans residues Arg-138–Pro-150. A helical transmembrane segment spans residues Leu-151 to Trp-171. The Vesicular portion of the chain corresponds to Gly-172 to Asn-213. Residue Asn-213 is glycosylated (N-linked (GlcNAc...) asparagine). Residues Ile-214–Phe-234 traverse the membrane as a helical segment. At Lys-235–Gln-264 the chain is on the cytoplasmic side. A disordered region spans residues Gln-242 to Gln-264.

Belongs to the synaptophysin/synaptobrevin family. Skeletal muscle.

The protein localises to the membrane. Its function is as follows. Involved in communication between the T-tubular and junctional sarcoplasmic reticulum (SR) membranes. The protein is Synaptophysin-like protein 2 (SYPL2) of Oryctolagus cuniculus (Rabbit).